We begin with the raw amino-acid sequence, 168 residues long: Plastocyanin A, chloroplastic (168 aa).

A chloroplast-targeting transit peptide spans Met1–Ala69. One can recognise a Plastocyanin-like domain in the interval Ile70–Asn168. Residues His106, Cys153, His156, and Met161 each contribute to the Cu cation site.

This sequence belongs to the plastocyanin family. Cu(2+) is required as a cofactor.

The protein localises to the plastid. Its subcellular location is the chloroplast thylakoid membrane. Functionally, participates in electron transfer between P700 and the cytochrome b6-f complex in photosystem I. The chain is Plastocyanin A, chloroplastic (PETE) from Populus nigra (Lombardy poplar).